Reading from the N-terminus, the 248-residue chain is UDP-2,3-diacylglucosamine hydrolase (248 aa).

5 residues coordinate Mn(2+): Asp7, His9, Asp40, Asn78, and His113. 78–79 provides a ligand contact to substrate; that stretch reads NR. Substrate-binding residues include Asp121, Ser159, Thr163, Lys166, and His194. Mn(2+) is bound by residues His194 and His196.

This sequence belongs to the LpxH family. Requires Mn(2+) as cofactor.

Its subcellular location is the cell inner membrane. The enzyme catalyses UDP-2-N,3-O-bis[(3R)-3-hydroxytetradecanoyl]-alpha-D-glucosamine + H2O = 2-N,3-O-bis[(3R)-3-hydroxytetradecanoyl]-alpha-D-glucosaminyl 1-phosphate + UMP + 2 H(+). Its pathway is glycolipid biosynthesis; lipid IV(A) biosynthesis; lipid IV(A) from (3R)-3-hydroxytetradecanoyl-[acyl-carrier-protein] and UDP-N-acetyl-alpha-D-glucosamine: step 4/6. Functionally, hydrolyzes the pyrophosphate bond of UDP-2,3-diacylglucosamine to yield 2,3-diacylglucosamine 1-phosphate (lipid X) and UMP by catalyzing the attack of water at the alpha-P atom. Involved in the biosynthesis of lipid A, a phosphorylated glycolipid that anchors the lipopolysaccharide to the outer membrane of the cell. This chain is UDP-2,3-diacylglucosamine hydrolase, found in Pseudomonas syringae pv. tomato (strain ATCC BAA-871 / DC3000).